The sequence spans 81 residues: MSHSVKIYDTCIGCTQCVRACPTDVLEMIPWDGCKAKQIASAPRTEDCVGCKRCESACPTDFLSVRVYLGPETTRSMALSY.

2 4Fe-4S ferredoxin-type domains span residues Ser2–Trp31 and Ile39–Tyr68. Cys11, Cys14, Cys17, Cys21, Cys48, Cys51, Cys54, and Cys58 together coordinate [4Fe-4S] cluster.

In terms of assembly, the eukaryotic PSI reaction center is composed of at least 11 subunits. [4Fe-4S] cluster serves as cofactor.

It is found in the plastid. The protein resides in the chloroplast thylakoid membrane. It carries out the reaction reduced [plastocyanin] + hnu + oxidized [2Fe-2S]-[ferredoxin] = oxidized [plastocyanin] + reduced [2Fe-2S]-[ferredoxin]. Its function is as follows. Apoprotein for the two 4Fe-4S centers FA and FB of photosystem I (PSI); essential for photochemical activity. FB is the terminal electron acceptor of PSI, donating electrons to ferredoxin. The C-terminus interacts with PsaA/B/D and helps assemble the protein into the PSI complex. Required for binding of PsaD and PsaE to PSI. PSI is a plastocyanin-ferredoxin oxidoreductase, converting photonic excitation into a charge separation, which transfers an electron from the donor P700 chlorophyll pair to the spectroscopically characterized acceptors A0, A1, FX, FA and FB in turn. The protein is Photosystem I iron-sulfur center of Triticum aestivum (Wheat).